Reading from the N-terminus, the 646-residue chain is MTRSLLWQMVIVLGAILMVNYVLTTLTPQTQEPVVDVSYSRFKTELAADNVAAITFEGNNVVGNLRERTILNRVEGTEEVQSFLRFRTTMPPVTDTRLLDDLEQRKVDVKVRPESKPSPWATAMIYMLPWLLIVGVWWFVIKGMRTRQGPGGGMMGGFSKSGAKMYTKERSRVTFADVAGLDEAKQELMEIIEFLRNPKKFMRLGAKAPRGVLLVGPPGTGKTLMARAVAGEAEVPFFTISASQFIEMFVGVGASRVRDLFNNAKKNAPSIIFIDELDAVGRSRGTGLGGGNDEREQTLNQLLSEMDGFEAHDEVIVMSATNRPDVLDPALLRPGRFDRQVTVERPDWRAREEILKVHTRQVPIDEDVDLQIIARSTPGMCGADLENLVNEAALIAARENAQKVTMQHFEQAKDRVLMGTERKLVMSQQEKRITAYHEAGHTLLARLSPGADPIHKVSIIPRGQALGVTQQLPVDDRYHYSRSYLMTRIAVSLGGRAAEKAIFEEYSTGAQNDLKQATDLAEKMVCQWGMSERVGPMSINRGEEHPFLGRKLASDNAFSQHMAWIIDQEIEKVVKAGEQAADEIIANHLPVLKKLADALLEEEVLDRTRVDEVLRETGIEVQDDPAAHPDGDHVLQGELAGGAVEG.

Residues 1–4 (MTRS) are Cytoplasmic-facing. A helical membrane pass occupies residues 5-25 (LLWQMVIVLGAILMVNYVLTT). Topologically, residues 26–120 (LTPQTQEPVV…VRPESKPSPW (95 aa)) are periplasmic. A helical transmembrane segment spans residues 121–141 (ATAMIYMLPWLLIVGVWWFVI). The Cytoplasmic portion of the chain corresponds to 142–646 (KGMRTRQGPG…GELAGGAVEG (505 aa)). 216 to 223 (GPPGTGKT) lines the ATP pocket. Position 437 (H437) interacts with Zn(2+). E438 is an active-site residue. Zn(2+) contacts are provided by H441 and D513.

This sequence in the central section; belongs to the AAA ATPase family. It in the C-terminal section; belongs to the peptidase M41 family. Homohexamer. Zn(2+) is required as a cofactor.

Its subcellular location is the cell inner membrane. Functionally, acts as a processive, ATP-dependent zinc metallopeptidase for both cytoplasmic and membrane proteins. Plays a role in the quality control of integral membrane proteins. This chain is ATP-dependent zinc metalloprotease FtsH, found in Syntrophotalea carbinolica (strain DSM 2380 / NBRC 103641 / GraBd1) (Pelobacter carbinolicus).